The chain runs to 181 residues: Translation initiation factor IF-3 (181 aa).

The protein belongs to the IF-3 family. As to quaternary structure, monomer.

The protein localises to the cytoplasm. In terms of biological role, IF-3 binds to the 30S ribosomal subunit and shifts the equilibrium between 70S ribosomes and their 50S and 30S subunits in favor of the free subunits, thus enhancing the availability of 30S subunits on which protein synthesis initiation begins. The chain is Translation initiation factor IF-3 from Mycoplasma mycoides subsp. mycoides SC (strain CCUG 32753 / NCTC 10114 / PG1).